A 253-amino-acid polypeptide reads, in one-letter code: Histone H1.4 (253 aa).

Positions M1–S33 are enriched in low complexity. Positions M1–V43 are disordered. S2 carries the post-translational modification N-acetylserine. In terms of domain architecture, H15 spans A51–E127. Positions K134–A253 are disordered. Composition is skewed to basic and acidic residues over residues A139–A149 and A188–V200. 2 stretches are compositionally biased toward basic residues: residues K201–A210 and A234–K244.

This sequence belongs to the histone H1/H5 family.

It is found in the nucleus. Its subcellular location is the chromosome. In terms of biological role, histones H1 are necessary for the condensation of nucleosome chains into higher-order structures. The protein is Histone H1.4 (hil-4) of Caenorhabditis elegans.